A 139-amino-acid polypeptide reads, in one-letter code: MSPPEGRVAALDLGEVWTGVAVSDPTRTLARPLEVVRTSELPGVLRRLVREEGVGEVLVGLPRTLRGEVGFQARRVSDRLSSLRAGFPEVRFVEWDERLTTKVVSGPLREGRRRGRRERVDHLAAARMLQEYLELGGGA.

This sequence belongs to the YqgF nuclease family.

Its subcellular location is the cytoplasm. In terms of biological role, could be a nuclease involved in processing of the 5'-end of pre-16S rRNA. The protein is Putative pre-16S rRNA nuclease of Rubrobacter xylanophilus (strain DSM 9941 / JCM 11954 / NBRC 16129 / PRD-1).